The chain runs to 67 residues: Protein SlyX homolog (67 aa).

Polar residues predominate over residues 48–60 (TSAPSTAAESNPQ). A disordered region spans residues 48–67 (TSAPSTAAESNPQHEIPPHY).

Belongs to the SlyX family.

The sequence is that of Protein SlyX homolog from Cupriavidus pinatubonensis (strain JMP 134 / LMG 1197) (Cupriavidus necator (strain JMP 134)).